A 511-amino-acid polypeptide reads, in one-letter code: Cobyric acid synthase (511 aa).

The GATase cobBQ-type domain maps to L251–F443. C332 serves as the catalytic Nucleophile. H435 is a catalytic residue.

This sequence belongs to the CobB/CobQ family. CobQ subfamily.

The protein operates within cofactor biosynthesis; adenosylcobalamin biosynthesis. In terms of biological role, catalyzes amidations at positions B, D, E, and G on adenosylcobyrinic A,C-diamide. NH(2) groups are provided by glutamine, and one molecule of ATP is hydrogenolyzed for each amidation. The protein is Cobyric acid synthase of Listeria monocytogenes serovar 1/2a (strain ATCC BAA-679 / EGD-e).